A 79-amino-acid polypeptide reads, in one-letter code: Protein VdcD (79 aa).

In terms of biological role, involved in the non-oxidative decarboxylation and detoxification of phenolic derivatives under both aerobic and anaerobic conditions, however the precise biochemical function of VdcD in metabolism of phenolic acid is unknown. The protein is Protein VdcD of Streptomyces sp. (strain D7).